We begin with the raw amino-acid sequence, 225 residues long: Cytidylate kinase (225 aa).

An ATP-binding site is contributed by 11 to 19; that stretch reads GPAGVGKST.

Belongs to the cytidylate kinase family. Type 1 subfamily.

The protein resides in the cytoplasm. It carries out the reaction CMP + ATP = CDP + ADP. The catalysed reaction is dCMP + ATP = dCDP + ADP. The chain is Cytidylate kinase from Lawsonia intracellularis (strain PHE/MN1-00).